We begin with the raw amino-acid sequence, 266 residues long: Oxidoreductase aflX (266 aa).

This sequence belongs to the avfA family.

Its pathway is mycotoxin biosynthesis; aflatoxin biosynthesis. In terms of biological role, oxidoreductase; part of the gene cluster that mediates the biosynthesis of aflatoxins, a group of polyketide-derived furanocoumarins, and part of the most toxic and carcinogenic compounds among the known mycotoxins. The four major aflatoxins produced by A.parasiticus are aflatoxin B1 (AFB1), aflatoxin B2 (AFB2), aflatoxin G1 (AFG1) and aflatoxin G2 (AFG2). Within the aflatoxin pathway, the oxidoreductase aflX seems to be involved in the conversion of versicolorin A (VERA) to demethylsterigmatocystin (DMST), through probable epoxide ring-opening step following versicolorin A oxidation required for the formation of the xanthone ring. The biosynthesis of aflatoxins begins with the norsolorinic acid synthase aflC that combines a hexanoyl starter unit produced by the fatty acid synthase aflA/aflB and 7 malonyl-CoA extender units to synthesize the precursor NOR. The second step is the conversion of NOR to averantin and requires the norsolorinic acid ketoreductase aflD, which catalyzes the dehydration of norsolorinic acid to form (1'S)-averantin. The norsolorinic acid reductases aflE and aflF may also play a role in the conversion of NOR to AVN. The cytochrome P450 monooxygenase aflG then catalyzes the hydroxylation of AVN to 5'hydroxyaverantin (HAVN). The next step is performed by the 5'-hydroxyaverantin dehydrogenase aflH that transforms HAVN to 5'-oxoaverantin (OAVN) which is further converted to averufin (AVF) by aflK that plays a dual role in the pathway, as a 5'-oxoaverantin cyclase that mediates conversion of 5'-oxoaverantin, as well as a versicolorin B synthase in a later step in the pathway. The averufin oxidase aflI catalyzes the conversion of AVF to versiconal hemiacetal acetate (VHA). VHA is then the substrate for the versiconal hemiacetal acetate esterase aflJ to yield versiconal (VAL). Versicolorin B synthase aflK then converts VAL to versicolorin B (VERB) by closing the bisfuran ring of aflatoxin which is required for DNA-binding, thus giving to aflatoxin its activity as a mutagen. Then, the activity of the versicolorin B desaturase aflL leads to versicolorin A (VERA). A branch point starts from VERB since it can also be converted to dihydrodemethylsterigmatocystin (DMDHST), probably also by aflL, VERA being a precursor for aflatoxins B1 and G1, and DMDHST for aflatoxins B2 and G2. Next, the versicolorin reductase aflM and the cytochrome P450 monooxygenase aflN are involved in conversion of VERA to demethylsterigmatocystin (DMST). AflX and aflY seem also involved in this step, through probable aflX-mediated epoxide ring-opening step following versicolorin A oxidation and aflY-mediated Baeyer-Villiger oxidation required for the formation of the xanthone ring. The methyltransferase aflO then leads to the modification of DMST to sterigmatocystin (ST), and of DMDHST to dihydrosterigmatocystin (DHST). Both ST and DHST are then substrates of the O-methyltransferase aflP to yield O-methylsterigmatocystin (OMST) and dihydro-O-methylsterigmatocystin (DHOMST), respectively. Finally OMST is converted to aflatoxins B1 and G1, and DHOMST to aflatoxins B2 and G2, via the action of several enzymes including O-methylsterigmatocystin oxidoreductase aflQ, the cytochrome P450 monooxygenase aflU, but also the NADH-dependent flavin oxidoreductase nadA which is specifically required for the synthesis of AFG1. This chain is Oxidoreductase aflX, found in Aspergillus parasiticus (strain ATCC 56775 / NRRL 5862 / SRRC 143 / SU-1).